We begin with the raw amino-acid sequence, 387 residues long: Protein-glutamate methylesterase/protein-glutamine glutaminase 2 (387 aa).

Residues 4–121 (KVLVVDDSGF…SRNPQKVKQL (118 aa)) enclose the Response regulatory domain. 4-aspartylphosphate is present on aspartate 55. A compositionally biased stretch (low complexity) spans 148-183 (AAPAAPTSSSRAPAPTTAPARAVPTRTAAPATAPAA). The segment at 148 to 199 (AAPAAPTSSSRAPAPTTAPARAVPTRTAAPATAPAAHAHHAPAHPTTSGTPK) is disordered. Positions 192 to 384 (PTTSGTPKRK…LDDIGRHLVE (193 aa)) constitute a CheB-type methylesterase domain. Residues serine 211, histidine 238, and aspartate 331 contribute to the active site.

The protein belongs to the CheB family. Post-translationally, phosphorylated by CheA. Phosphorylation of the N-terminal regulatory domain activates the methylesterase activity.

It is found in the cytoplasm. The enzyme catalyses [protein]-L-glutamate 5-O-methyl ester + H2O = L-glutamyl-[protein] + methanol + H(+). It carries out the reaction L-glutaminyl-[protein] + H2O = L-glutamyl-[protein] + NH4(+). Functionally, involved in chemotaxis. Part of a chemotaxis signal transduction system that modulates chemotaxis in response to various stimuli. Catalyzes the demethylation of specific methylglutamate residues introduced into the chemoreceptors (methyl-accepting chemotaxis proteins or MCP) by CheR. Also mediates the irreversible deamidation of specific glutamine residues to glutamic acid. This is Protein-glutamate methylesterase/protein-glutamine glutaminase 2 from Pseudomonas savastanoi pv. phaseolicola (strain 1448A / Race 6) (Pseudomonas syringae pv. phaseolicola (strain 1448A / Race 6)).